We begin with the raw amino-acid sequence, 500 residues long: Protein nucleotidyltransferase YdiU (500 aa).

8 residues coordinate ATP: G96, G98, R99, K119, D131, G132, R182, and R189. Residue D258 is the Proton acceptor of the active site. 2 residues coordinate Mg(2+): N259 and D268. D268 is an ATP binding site.

The protein belongs to the SELO family. It depends on Mg(2+) as a cofactor. Mn(2+) serves as cofactor.

It carries out the reaction L-seryl-[protein] + ATP = 3-O-(5'-adenylyl)-L-seryl-[protein] + diphosphate. The enzyme catalyses L-threonyl-[protein] + ATP = 3-O-(5'-adenylyl)-L-threonyl-[protein] + diphosphate. It catalyses the reaction L-tyrosyl-[protein] + ATP = O-(5'-adenylyl)-L-tyrosyl-[protein] + diphosphate. The catalysed reaction is L-histidyl-[protein] + UTP = N(tele)-(5'-uridylyl)-L-histidyl-[protein] + diphosphate. It carries out the reaction L-seryl-[protein] + UTP = O-(5'-uridylyl)-L-seryl-[protein] + diphosphate. The enzyme catalyses L-tyrosyl-[protein] + UTP = O-(5'-uridylyl)-L-tyrosyl-[protein] + diphosphate. In terms of biological role, nucleotidyltransferase involved in the post-translational modification of proteins. It can catalyze the addition of adenosine monophosphate (AMP) or uridine monophosphate (UMP) to a protein, resulting in modifications known as AMPylation and UMPylation. The protein is Protein nucleotidyltransferase YdiU of Rhizobium etli (strain ATCC 51251 / DSM 11541 / JCM 21823 / NBRC 15573 / CFN 42).